A 332-amino-acid chain; its full sequence is tRNA-dihydrouridine synthase B (332 aa).

FMN is bound by residues 19-21 (PMA) and Gln73. The Proton donor role is filled by Cys103. FMN contacts are provided by residues Lys142, 203–205 (NGD), and 227–228 (GR).

The protein belongs to the Dus family. DusB subfamily. FMN serves as cofactor.

It carries out the reaction a 5,6-dihydrouridine in tRNA + NAD(+) = a uridine in tRNA + NADH + H(+). It catalyses the reaction a 5,6-dihydrouridine in tRNA + NADP(+) = a uridine in tRNA + NADPH + H(+). Its function is as follows. Catalyzes the synthesis of 5,6-dihydrouridine (D), a modified base found in the D-loop of most tRNAs, via the reduction of the C5-C6 double bond in target uridines. This Pseudomonas aeruginosa (strain ATCC 15692 / DSM 22644 / CIP 104116 / JCM 14847 / LMG 12228 / 1C / PRS 101 / PAO1) protein is tRNA-dihydrouridine synthase B.